Consider the following 1396-residue polypeptide: Sterol 3-beta-glucosyltransferase (1396 aa).

Residues 1 to 16 show a composition bias toward basic and acidic residues; it reads MRPFIDDAKRRAERRL. 4 disordered regions span residues 1 to 21, 40 to 64, 83 to 196, and 209 to 232; these read MRPF…ASRQ, DADD…MQYM, ARFD…RAAP, and ETEN…KKSQ. Over residues 94-107 the composition is skewed to basic and acidic residues; the sequence is ETRTRPRFLSEKPF. Low complexity predominate over residues 186-196; sequence RPRSATPRAAP. The region spanning 238 to 273 is the GRAM 1 domain; sequence RQLMEMFRFPTPEKVVVEYACSLLQSMLLQGYMYVT. The PH domain occupies 289 to 388; sequence RVIKSGYIYK…WVRALQKVIF (100 aa). Disordered regions lie at residues 460-532 and 571-627; these read GTPT…SSSS and TIHT…ESKD. Composition is skewed to polar residues over residues 484–532 and 571–584; these read GSQN…SSSS and TIHT…GTAR. The span at 588–602 shows a compositional bias: basic and acidic residues; that stretch reads RHSDEITRSTTEHGL. Residues 717-783 form the GRAM 2 domain; the sequence is ERFRAHFALP…HDIENVEKEK (67 aa). UDP-alpha-D-glucose contacts are provided by Ser-905, Arg-906, Asp-908, Ala-1208, His-1210, His-1223, Gly-1227, Thr-1228, Asp-1247, and Gln-1248. Over residues 1324–1343 the composition is skewed to low complexity; that stretch reads SSISSTPFSPTPSTKTSDDQ. The segment at 1324-1346 is disordered; that stretch reads SSISSTPFSPTPSTKTSDDQNAN.

Belongs to the glycosyltransferase 28 family.

The protein localises to the cytoplasm. It localises to the preautophagosomal structure membrane. The enzyme catalyses a sterol + UDP-alpha-D-glucose = a sterol 3-beta-D-glucoside + UDP + H(+). The catalysed reaction is ergosterol + UDP-alpha-D-glucose = ergosteryl 3-beta-D-glucoside + UDP + H(+). Sterol glycosyltransferase responsible for the glycosylation of ergosterol to form ergosterol-glucoside. This chain is Sterol 3-beta-glucosyltransferase, found in Emericella nidulans (strain FGSC A4 / ATCC 38163 / CBS 112.46 / NRRL 194 / M139) (Aspergillus nidulans).